The chain runs to 604 residues: uncharacterized protein (604 aa).

An N-terminal signal peptide occupies residues 1 to 19 (MIVRILLLFIALFTFGVQA).

It to H.influenzae HbpA.

This is an uncharacterized protein from Escherichia coli (strain K12).